Here is a 61-residue protein sequence, read N- to C-terminus: Potassium channel toxin alpha-KTx 6.6 (61 aa).

The N-terminal stretch at 1-23 (MNAKFILLLLVVATTMLLPDTQG) is a signal peptide. Disulfide bonds link C29-C50, C35-C55, C39-C57, and C45-C60. At C60 the chain carries Cysteine amide.

Belongs to the short scorpion toxin superfamily. Potassium channel inhibitor family. Alpha-KTx 06 subfamily. In terms of tissue distribution, expressed by the venom gland.

Its subcellular location is the secreted. Blocker of voltage-gated potassium channels. This Opistophthalmus carinatus (African yellow leg scorpion) protein is Potassium channel toxin alpha-KTx 6.6.